Consider the following 628-residue polypeptide: Putative pentatricopeptide repeat-containing protein At3g13770, mitochondrial (628 aa).

The transit peptide at 1 to 19 directs the protein to the mitochondrion; sequence MFNLMRLIHRSFSSSPTNY. 11 PPR repeats span residues 51 to 85, 86 to 116, 117 to 151, 152 to 186, 187 to 217, 218 to 252, 253 to 287, 288 to 318, 319 to 353, 355 to 389, and 392 to 422; these read GFHGYDALLNACLDKRALRDGQRVHAHMIKTRYLP, ATYLRTRLLIFYGKCDCLEDARKVLDEMPEK, NVVSWTAMISRYSQTGHSSEALTVFAEMMRSDGKP, NEFTFATVLTSCIRASGLGLGKQIHGLIVKWNYDS, HIFVGSSLLDMYAKAGQIKEAREIFECLPER, DVVSCTAIIAGYAQLGLDEEALEMFHRLHSEGMSP, NYVTYASLLTALSGLALLDHGKQAHCHVLRRELPF, YAVLQNSLIDMYSKCGNLSYARRLFDNMPER, TAISWNAMLVGYSKHGLGREVLELFRLMRDEKRVK, DAVTLLAVLSGCSHGRMEDTGLNIFDGMVAGEYGT, and GTEHYGCIVDMLGRAGRIDEAFEFIKRMPSK. The interval 427–502 is type E motif; it reads VLGSLLGACR…EPGRSWIQHE (76 aa). The tract at residues 503-533 is type E(+) motif; that stretch reads QTLHYFHANDRTHPRREEVLAKMKEISIKMK. The tract at residues 534–628 is type DYW motif; sequence QAGYVPDLSC…DGICSCGDYW (95 aa).

Belongs to the PPR family. PCMP-H subfamily.

It is found in the mitochondrion. This chain is Putative pentatricopeptide repeat-containing protein At3g13770, mitochondrial (PCMP-H85), found in Arabidopsis thaliana (Mouse-ear cress).